The sequence spans 220 residues: Iron-sulfur cluster repair protein YtfE (220 aa).

The protein belongs to the RIC family. YtfE subfamily. Homodimer.

The protein resides in the cytoplasm. Di-iron-containing protein involved in the repair of iron-sulfur clusters damaged by oxidative and nitrosative stress conditions. The protein is Iron-sulfur cluster repair protein YtfE of Citrobacter koseri (strain ATCC BAA-895 / CDC 4225-83 / SGSC4696).